Reading from the N-terminus, the 567-residue chain is Urease subunit alpha (567 aa).

Positions 129-567 constitute a Urease domain; it reads GGVDTHIHWI…LPMAQRYFLF (439 aa). The Ni(2+) site is built by histidine 134, histidine 136, and lysine 217. Residue lysine 217 is modified to N6-carboxylysine. Residue histidine 219 participates in substrate binding. Histidine 246 and histidine 272 together coordinate Ni(2+). Histidine 320 (proton donor) is an active-site residue. Ni(2+) is bound at residue aspartate 360.

The protein belongs to the metallo-dependent hydrolases superfamily. Urease alpha subunit family. Heterotrimer of UreA (gamma), UreB (beta) and UreC (alpha) subunits. Three heterotrimers associate to form the active enzyme. The cofactor is Ni cation. In terms of processing, carboxylation allows a single lysine to coordinate two nickel ions.

The protein resides in the cytoplasm. It carries out the reaction urea + 2 H2O + H(+) = hydrogencarbonate + 2 NH4(+). It functions in the pathway nitrogen metabolism; urea degradation; CO(2) and NH(3) from urea (urease route): step 1/1. The sequence is that of Urease subunit alpha from Escherichia coli O157:H7.